Reading from the N-terminus, the 209-residue chain is Ribosome maturation factor RimM (209 aa).

Residues 1–28 (MARRPQRPAPSGRAGAGRGAAGAAPPGP) form a disordered region. A PRC barrel domain is found at 123–197 (EDEFFTADLV…RVTIAPPEDL (75 aa)).

This sequence belongs to the RimM family. Binds ribosomal protein uS19.

It is found in the cytoplasm. Its function is as follows. An accessory protein needed during the final step in the assembly of 30S ribosomal subunit, possibly for assembly of the head region. Essential for efficient processing of 16S rRNA. May be needed both before and after RbfA during the maturation of 16S rRNA. It has affinity for free ribosomal 30S subunits but not for 70S ribosomes. The chain is Ribosome maturation factor RimM from Methylobacterium sp. (strain 4-46).